We begin with the raw amino-acid sequence, 1504 residues long: DNA polymerase zeta catalytic subunit (1504 aa).

Zn(2+) contacts are provided by Cys-1398, Cys-1401, Cys-1414, and Cys-1417. A CysA-type zinc finger spans residues 1398 to 1417; the sequence is CCNCGEELTKICSLQLCDDC. 4 residues coordinate [4Fe-4S] cluster: Cys-1446, Cys-1449, Cys-1468, and Cys-1473. Residues 1446 to 1473 carry the CysB motif motif; it reads CRTCSYRYTSDAGIENDHIASKCNSYDC.

This sequence belongs to the DNA polymerase type-B family. Forms DNA polymerase zeta with REV7. Requires [4Fe-4S] cluster as cofactor.

The protein localises to the mitochondrion. It is found in the nucleus. The catalysed reaction is DNA(n) + a 2'-deoxyribonucleoside 5'-triphosphate = DNA(n+1) + diphosphate. Its function is as follows. Nonessential DNA polymerase. Required for DNA damage induced mutagenesis. Involved in DNA repair, mitochondrial DNA repair and translesion synthesis. Translesion synthesis in S.cerevisiae may use a specialized DNA polymerase that is not required for other DNA replicative processes. Has a role in the bypass of abasic (AP) sites. Highly inefficient in incorporating nucleotides opposite the AP site, but efficiently extends from nucleotides, particularly an A, inserted opposite the lesion. The polypeptide is DNA polymerase zeta catalytic subunit (REV3) (Saccharomyces cerevisiae (strain ATCC 204508 / S288c) (Baker's yeast)).